A 231-amino-acid polypeptide reads, in one-letter code: MATNTMLCLLILSVVLALAFATNKKGDEEPENHSTGIFGKVGRVVTVALAMSSRLGGADATRGGGAVYGGNLKSNQLPNNNWMAPPPPMAIRSAKVYDSKHSPAEYLKKFAQDFRRKTGMHSQRHHEETTLEQEKRVAGAGPDPIHHEETTLEQEKRAVPAGPDPKHHEETTLEQEKRAVPAGPDPKHHEETTLEQEKRAVPAGPDPKHHEETTFEQEKRGAPAGPDPIHH.

Residues 1-21 (MATNTMLCLLILSVVLALAFA) form the signal peptide. Positions 21–83 (ATNKKGDEEP…SNQLPNNNWM (63 aa)) are required for secretion from the host cytoplasm to the host apoplasm. The N-linked (GlcNAc...) asparagine glycan is linked to Asn32. Positions 116 to 231 (RKTGMHSQRH…APAGPDPIHH (116 aa)) are disordered. Composition is skewed to basic and acidic residues over residues 125–137 (HHEE…EKRV) and 144–221 (PIHH…EKRG). Residues 127–135 (EETTLEQEK) form an A-1 repeat. The interval 127 to 219 (EETTLEQEKR…HEETTFEQEK (93 aa)) is 5 X approximate repeat A. One copy of the CLE-1 repeat lies at 136 to 147 (RVAGAGPDPIHH). The 5 X approximate repeat CLE stretch occupies residues 136 to 231 (RVAGAGPDPI…APAGPDPIHH (96 aa)). Residues 148–156 (EETTLEQEK) form an A-2 repeat. The CLE-2 repeat unit spans residues 157–168 (RAVPAGPDPKHH). One copy of the A-3 repeat lies at 169–177 (EETTLEQEK). Residues 178-189 (RAVPAGPDPKHH) form a CLE-3 repeat. An A-4 repeat occupies 190-198 (EETTLEQEK). A CLE-4 repeat occupies 199–210 (RAVPAGPDPKHH). An A-5 repeat occupies 211–219 (EETTFEQEK). The CLE-5 repeat unit spans residues 220 to 231 (RGAPAGPDPIHH).

The protein belongs to the CLV3/ESR signal peptide family. In terms of tissue distribution, highly expressed exclusively within the dorsal esophageal gland cell during syncytium formation in host plants.

It localises to the secreted. It is found in the host cytoplasm. The protein resides in the host extracellular space. Its subcellular location is the extracellular space. The protein localises to the apoplast. In terms of biological role, mimics host plant CLE extracellular signal peptides that regulate cell fate. May play a role in the differentiation or division of feeding cells (syncytia) induced in plant roots during infection. In Globodera rostochiensis (Golden nematode worm), this protein is CLAVATA3/ESR (CLE)-related protein 4B-2 (CLE-4B-2).